A 531-amino-acid chain; its full sequence is CCA tRNA nucleotidyltransferase, mitochondrial (531 aa).

Belongs to the tRNA nucleotidyltransferase/poly(A) polymerase family.

It is found in the mitochondrion. The protein resides in the cytoplasm. Its subcellular location is the nucleus. The catalysed reaction is a tRNA precursor + 2 CTP + ATP = a tRNA with a 3' CCA end + 3 diphosphate. Its function is as follows. Nucleotidyltransferase that catalyzes the addition and repair of the essential 3'-terminal CCA sequence in tRNAs, which is necessary for the attachment of amino acids to the 3' terminus of tRNA molecules, using CTP and ATP as substrates. tRNA 3'-terminal CCA addition is required both for tRNA processing and repair. Also involved in tRNA surveillance by mediating tandem CCA addition to generate a CCACCA at the 3' terminus of unstable tRNAs. While stable tRNAs receive only 3'-terminal CCA, unstable tRNAs are marked with CCACCA and rapidly degraded. The structural flexibility of RNA controls the choice between CCA versus CCACCA addition: following the first CCA addition cycle, nucleotide-binding to the active site triggers a clockwise screw motion, producing torque on the RNA. This ejects stable RNAs, whereas unstable RNAs are refolded while bound to the enzyme and subjected to a second CCA catalytic cycle. This chain is CCA tRNA nucleotidyltransferase, mitochondrial (CCA1), found in Candida glabrata (strain ATCC 2001 / BCRC 20586 / JCM 3761 / NBRC 0622 / NRRL Y-65 / CBS 138) (Yeast).